Reading from the N-terminus, the 87-residue chain is Omega-lycotoxin-Am1b (87 aa).

A signal peptide spans 1 to 17 (MKLSIFFVLFFIAIAYC). Residues 18–40 (QPEFLDDEEDEVEETLPVAEEGR) constitute a propeptide that is removed on maturation. 4 disulfides stabilise this stretch: Cys-44/Cys-59, Cys-51/Cys-64, Cys-58/Cys-84, and Cys-66/Cys-82.

It belongs to the neurotoxin omega-lctx family. As to expression, expressed by the venom gland.

Its subcellular location is the secreted. Modulates Cav2.1/CACNA1A voltage-gated calcium channels (P/Q-type currents) in rat cerebellar Purkinje cells and hippocampal CA1-CA3 neurons. At saturating concentrations (&gt;10 nM) decelerates activation kinetics and slightly increases peak amplitude without affecting deactivation kinetics. In vivo, does not cause death when intravenously injected into mice. In rat models, through its activity on Cav2.1/CACNA1A, has an ameliorative effect on memory defects provoked by hyperstimulation of N-methyl-D-aspartate receptors (NMDARs) in the hippocampus. The polypeptide is Omega-lycotoxin-Am1b (Alopecosa marikovskyi (Wolf spider)).